The chain runs to 144 residues: Grifin (144 aa).

One can recognise a Galectin domain in the interval 5–133 (FEAFCAGGLA…EHRLAQVELA (129 aa)). The residue at position 138 (Ser-138) is a Phosphoserine.

In terms of assembly, homodimer.

The polypeptide is Grifin (Grifin) (Mus musculus (Mouse)).